Reading from the N-terminus, the 305-residue chain is MHYSVLLQESINDLNINPQGIYIDATFGRGGHSKAILNRLTTGRLIAFDKDLDAISYARENFQFSNFEIVHASFASIYDYCLQHSLLGKIDGIIMDLGVSSPQLDNAARGFSFTHNGPLDMRMDVSKGITASQALEELSVYDLSYIFKVYGEERFAKKIALRIKDYIQQNGSIRTTLELAELIRATIGKKEKKNPATRCFQALRIYVNNELKDLEALLENILAVIKSGGRIAAISFHSLEDRIVKQKFSALINPKQELNRITKMLPQDSSQIKLKWITKKSKANEDELNQNVRSRSAILRVVEKL.

Residues 30 to 32 (GGH), Asp-49, Phe-74, Asp-96, and Gln-103 contribute to the S-adenosyl-L-methionine site.

This sequence belongs to the methyltransferase superfamily. RsmH family.

The protein localises to the cytoplasm. The enzyme catalyses cytidine(1402) in 16S rRNA + S-adenosyl-L-methionine = N(4)-methylcytidine(1402) in 16S rRNA + S-adenosyl-L-homocysteine + H(+). Its function is as follows. Specifically methylates the N4 position of cytidine in position 1402 (C1402) of 16S rRNA. This Francisella tularensis subsp. holarctica (strain LVS) protein is Ribosomal RNA small subunit methyltransferase H.